A 223-amino-acid polypeptide reads, in one-letter code: Endonuclease V (223 aa).

Mg(2+)-binding residues include Asp-35 and Asp-103.

It belongs to the endonuclease V family. Requires Mg(2+) as cofactor.

It localises to the cytoplasm. It catalyses the reaction Endonucleolytic cleavage at apurinic or apyrimidinic sites to products with a 5'-phosphate.. DNA repair enzyme involved in the repair of deaminated bases. Selectively cleaves double-stranded DNA at the second phosphodiester bond 3' to a deoxyinosine leaving behind the intact lesion on the nicked DNA. The sequence is that of Endonuclease V from Salmonella agona (strain SL483).